The chain runs to 1242 residues: Receptor-type adenylate cyclase GRESAG 4.1 (1242 aa).

At 1–39 (MHWQEGGGRGCVYTHGNCRRNLTARALQALQHVEALTCH) the chain is on the cytoplasmic side. The helical transmembrane segment at 40 to 60 (YCVSLLHLLPLLLMWMPPVCA) threads the bilayer. The Extracellular portion of the chain corresponds to 61–862 (DDSAVTVNVL…THTVTDSWNN (802 aa)). N-linked (GlcNAc...) asparagine glycans are attached at residues asparagine 116, asparagine 289, asparagine 318, asparagine 338, asparagine 401, asparagine 534, asparagine 563, asparagine 603, asparagine 702, asparagine 741, and asparagine 818. The chain crosses the membrane as a helical span at residues 863–883 (FWVCIRLVIIYCPWCVPTHLP). Residues 884 to 1242 (AERRNNNRAP…PFYDMHLQEY (359 aa)) lie on the Cytoplasmic side of the membrane. Residues 901 to 1056 (TLIFTDIESS…RTPNMAARTE (156 aa)) enclose the Guanylate cyclase domain. Mg(2+) contacts are provided by aspartate 906 and aspartate 949.

Belongs to the adenylyl cyclase class-3 family. It depends on Mg(2+) as a cofactor.

Its subcellular location is the membrane. It catalyses the reaction ATP = 3',5'-cyclic AMP + diphosphate. In terms of biological role, could act as a receptor for an unknown ligand. This Trypanosoma brucei brucei protein is Receptor-type adenylate cyclase GRESAG 4.1 (GRESAG 4.1).